Here is a 207-residue protein sequence, read N- to C-terminus: Dephospho-CoA kinase (207 aa).

Positions 5–203 constitute a DPCK domain; sequence AVGLTGGVAC…ARYRALASVF (199 aa). ATP is bound at residue 13–18; the sequence is ACGKSL.

It belongs to the CoaE family.

The protein localises to the cytoplasm. It catalyses the reaction 3'-dephospho-CoA + ATP = ADP + CoA + H(+). It participates in cofactor biosynthesis; coenzyme A biosynthesis; CoA from (R)-pantothenate: step 5/5. Its function is as follows. Catalyzes the phosphorylation of the 3'-hydroxyl group of dephosphocoenzyme A to form coenzyme A. This Xylella fastidiosa (strain Temecula1 / ATCC 700964) protein is Dephospho-CoA kinase.